Consider the following 239-residue polypeptide: MKLSTIFTAFAATIATVAGYETTGSKQTVDILIDYIIKETPELSQNDVANWENGDTVTLQYVVNNNEESEITVVGVTGQFKNPINNEIVTNLTTGKVGPIAVPPGEAIKFDQKINVDLIPANYELIPHVFIAQDSLIKVIPCRGQLATIVDAAVSFFDPRLIFLELVLLITFAGLIYVGYEIWGKQYFKGVAPVKAKKVSAAKASSPVATGPSTTSATGYDTNWIPESHLKQKKTKKVN.

The N-terminal stretch at 1–19 (MKLSTIFTAFAATIATVAG) is a signal peptide. At 20–161 (YETTGSKQTV…AAVSFFDPRL (142 aa)) the chain is on the lumenal side. A helical membrane pass occupies residues 162 to 182 (IFLELVLLITFAGLIYVGYEI). Topologically, residues 183–239 (WGKQYFKGVAPVKAKKVSAAKASSPVATGPSTTSATGYDTNWIPESHLKQKKTKKVN) are cytoplasmic. Residues 202-222 (AKASSPVATGPSTTSATGYDT) form a disordered region. Polar residues predominate over residues 211–221 (GPSTTSATGYD).

It belongs to the IRC22 family.

It is found in the endoplasmic reticulum membrane. Is probably involved in a pathway contributing to genomic integrity. The chain is Increased recombination centers protein 22-2 (IRC22-2) from Candida albicans (strain SC5314 / ATCC MYA-2876) (Yeast).